The primary structure comprises 412 residues: L-cysteine:1D-myo-inositol 2-amino-2-deoxy-alpha-D-glucopyranoside ligase (412 aa).

Cysteine 45 lines the Zn(2+) pocket. L-cysteinyl-5'-AMP is bound by residues 45–48 (CGIT), threonine 60, and 83–85 (NIT). Residues 47-57 (ITPYDAAHLGH) carry the 'HIGH' region motif. The 'ERGGDP' region signature appears at 185 to 190 (ERGGDP). Tryptophan 225 is a binding site for L-cysteinyl-5'-AMP. Cysteine 229 is a Zn(2+) binding site. Residue 247 to 249 (GDD) coordinates L-cysteinyl-5'-AMP. Histidine 254 is a binding site for Zn(2+). Valine 281 provides a ligand contact to L-cysteinyl-5'-AMP. Residues 287–291 (KMSKS) carry the 'KMSKS' region motif.

The protein belongs to the class-I aminoacyl-tRNA synthetase family. MshC subfamily. Monomer. Zn(2+) is required as a cofactor.

It carries out the reaction 1D-myo-inositol 2-amino-2-deoxy-alpha-D-glucopyranoside + L-cysteine + ATP = 1D-myo-inositol 2-(L-cysteinylamino)-2-deoxy-alpha-D-glucopyranoside + AMP + diphosphate + H(+). Functionally, catalyzes the ATP-dependent condensation of GlcN-Ins and L-cysteine to form L-Cys-GlcN-Ins. The protein is L-cysteine:1D-myo-inositol 2-amino-2-deoxy-alpha-D-glucopyranoside ligase of Thermobifida fusca (strain YX).